A 3072-amino-acid polypeptide reads, in one-letter code: E1A-binding protein p400 (3072 aa).

The segment covering 1–22 (MHHGSGPQNVQHQLQRSRSFTG) has biased composition (polar residues). 3 disordered regions span residues 1–55 (MHHG…SPGY), 125–149 (PMSQ…LQNV), and 222–250 (LSQP…TGLQ). A compositionally biased stretch (pro residues) spans 31 to 40 (PNLPPSPAAP). 2 stretches are compositionally biased toward low complexity: residues 41 to 53 (FAPS…PQSP) and 125 to 136 (PMSQQVQTQSPT). S52 and S134 each carry phosphoserine. Phosphoserine is present on residues S315 and S321. 3 disordered regions span residues 485–519 (SLTG…KRPR), 544–601 (MPTV…ASVP), and 635–769 (APIP…SQDK). Residues 556-569 (QATQLTGQKQSQQQ) show a composition bias toward low complexity. Positions 570-583 (YDPSTGPPVQNAAS) are enriched in polar residues. Pro residues predominate over residues 586–599 (TPPPQLPARLPPAS). 3 stretches are compositionally biased toward low complexity: residues 646-657 (PAPSSQPAQPAL), 668-682 (QTSQ…VAST), and 695-710 (SLPT…PVSG). 2 stretches are compositionally biased toward polar residues: residues 724–741 (NRPS…TSRS) and 754–765 (SPAQNAASSQDG). Phosphoserine occurs at positions 735, 741, and 754. Residues 798–870 (LPKLQEAPRP…EQSRLRRIAA (73 aa)) form the HSA domain. Residues 914–928 (ESRLKGFDTSPEHSL) show a composition bias toward basic and acidic residues. 2 disordered regions span residues 914–952 (ESRL…EDEE) and 997–1024 (FQWP…DRES). T922 is subject to Phosphothreonine. S923, S927, and S940 each carry phosphoserine. T944 is subject to Phosphothreonine. An interactions with RUVBL1 and RUVBL2 region spans residues 950–1364 (DEEETIEEEE…SVLSVLTRLQ (415 aa)). 2 positions are modified to phosphoserine: S1009 and S1010. The Helicase ATP-binding domain maps to 1102-1267 (AKLYRKNLNG…WTMVHFLIPG (166 aa)). 1115–1122 (DEAGLGKT) serves as a coordination point for ATP. A DEAD box-like motif is present at residues 1218 to 1221 (DEMQ). K1471 bears the N6-acetyllysine mark. The disordered stretch occupies residues 1473–1503 (EGRTVAFPSTHPPRMANTNTSTATPQGQVRG). The segment covering 1488 to 1499 (ANTNTSTATPQG) has biased composition (polar residues). A phosphoserine mark is found at S1646 and S1650. One can recognise a Helicase C-terminal domain in the interval 1815-1972 (KLEALAILLQ…GNDYSMAFLT (158 aa)). 2 disordered regions span residues 2033–2062 (AQRS…DEEP) and 2203–2227 (KERK…GEAV). The span at 2043–2053 (GSSSVAVSSDS) shows a compositional bias: low complexity. 2 positions are modified to N6-acetyllysine: K2265 and K2272. One can recognise a Myb-like domain in the interval 2276-2345 (EPAQDSPDWL…QCRNRYENVI (70 aa)). Residues 2440–2699 (KEKKALADQQ…QQQQQQQQQT (260 aa)) are interaction with ZNF42. The interval 2441–2534 (EKKALADQQK…PQSKGQPTMT (94 aa)) is disordered. Composition is skewed to low complexity over residues 2446–2455 (ADQQKAQQPP) and 2463–2478 (QQQQ…QQQQ). Pro residues predominate over residues 2479–2493 (QPPPPPQQPPPPVPQ). The span at 2494–2526 (PQAASSQTPAGQPAVQPQPQPQVQTQPQPVQPQ) shows a compositional bias: low complexity. The residue at position 2614 (S2614) is a Phosphoserine. Disordered regions lie at residues 2734 to 2790 (QKMQ…TGTT) and 3028 to 3072 (ASLQ…PPCQ). Positions 2739–2754 (PPQPPPPQAQPGPPQQ) are enriched in pro residues. Low complexity predominate over residues 2755 to 2775 (PAQVQVQTPQPPQQQQSPQLT). A compositionally biased stretch (polar residues) spans 3042 to 3053 (PASSDSPSQQPK).

The protein belongs to the SNF2/RAD54 helicase family. SWR1 subfamily. In terms of assembly, component of the NuA4 histone acetyltransferase complex which contains the catalytic subunit KAT5/TIP60 and the subunits EP400, TRRAP/PAF400, BRD8/SMAP, EPC1, DMAP1/DNMAP1, RUVBL1/TIP49, RUVBL2, ING3, actin, ACTL6A/BAF53A, MORF4L1/MRG15, MORF4L2/MRGX, MRGBP, YEATS4/GAS41, VPS72/YL1 and MEAF6. May also participate in the formation of NuA4 related complexes which lack the KAT5/TIP60 catalytic subunit, but which include the SWI/SNF related protein SRCAP. The NuA4 complex interacts with MYC. EP400 interacts with TRRAP, RUVBL1 and RUVBL2. Component of a SWR1-like complex. Interacts with ZNF42. Interacts with PHF5A. As to expression, expressed in brain, thymus, lung, liver, spleen, kidney, colon and bone marrow.

It is found in the nucleus. In terms of biological role, component of the NuA4 histone acetyltransferase complex which is involved in transcriptional activation of select genes principally by acetylation of nucleosomal histones H4 and H2A. This modification may both alter nucleosome - DNA interactions and promote interaction of the modified histones with other proteins which positively regulate transcription. May be required for transcriptional activation of E2F1 and MYC target genes during cellular proliferation. The NuA4 complex ATPase and helicase activities seem to be, at least in part, contributed by the association of RUVBL1 and RUVBL2 with EP400. Component of a SWR1-like complex that specifically mediates the removal of histone H2A.Z/H2AZ1 from the nucleosome. Regulates transcriptional activity of ZNF42. The chain is E1A-binding protein p400 (Ep400) from Mus musculus (Mouse).